The primary structure comprises 144 residues: Large ribosomal subunit protein uL15 (144 aa).

Residues 1–53 (MYLNTLAPAEGAKHSAKRLGRGIGSGLGKTGGRGHKGQKSRTGGGVRRGFEGG) form a disordered region. The segment covering 21–31 (RGIGSGLGKTG) has biased composition (gly residues).

It belongs to the universal ribosomal protein uL15 family. As to quaternary structure, part of the 50S ribosomal subunit.

Functionally, binds to the 23S rRNA. This chain is Large ribosomal subunit protein uL15, found in Mannheimia succiniciproducens (strain KCTC 0769BP / MBEL55E).